Here is an 86-residue protein sequence, read N- to C-terminus: Putative antitoxin VapB5 (86 aa).

It belongs to the phD/YefM antitoxin family. As to quaternary structure, forms a complex with VapC5.

Functionally, probable antitoxin component of a probable type II toxin-antitoxin (TA) system. The cognate toxin is VapC5. This chain is Putative antitoxin VapB5 (vapB5), found in Mycobacterium tuberculosis (strain CDC 1551 / Oshkosh).